A 378-amino-acid polypeptide reads, in one-letter code: Cln5-like protein 1 (378 aa).

The first 20 residues, 1–20 (MNKIIIFILFLISILQSVRG), serve as a signal peptide directing secretion. Residues asparagine 63, asparagine 93, asparagine 135, asparagine 181, asparagine 220, asparagine 226, asparagine 254, and asparagine 280 are each glycosylated (N-linked (GlcNAc...) asparagine). Residues 308-328 (WIFIIILLSFTTVYLVGGILI) traverse the membrane as a helical segment.

The protein belongs to the CLN5 family.

The protein resides in the membrane. This chain is Cln5-like protein 1 (cln5la), found in Dictyostelium discoideum (Social amoeba).